The following is a 343-amino-acid chain: Signal peptide peptidase 2 (343 aa).

The Lumenal segment spans residues 1–19 (MKTHERAANLALAGLSLAP). The chain crosses the membrane as a helical span at residues 20 to 40 (LVVKVNPNANVILTACLAVYV). Residues 41-62 (GCYRSVKPTPPAETMSKEHAMR) are Cytoplasmic-facing. A helical membrane pass occupies residues 63–83 (FPLVGSAMLLSLFLLFKFLSK). Topologically, residues 84–89 (DLVNTV) are lumenal. Residues 90 to 110 (LTAYFFILGIAALCATLLPSI) form a helical membrane-spanning segment. The Cytoplasmic portion of the chain corresponds to 111-141 (KRFLPKEWNDNAIVWRAPLFHSLSVEFTRSQ). A helical membrane pass occupies residues 142-162 (VVASIPGFFFCIWYAAKKHWL). Residues 163 to 165 (ANN) lie on the Lumenal side of the membrane. Residues 166–186 (VLGISFCIQGIEMLSLGSFKT) traverse the membrane as a helical segment. Topologically, residues 187–188 (GA) are cytoplasmic. Residues 189 to 209 (ILLSGLFFYDIFWVFFTPVMV) traverse the membrane as a helical segment. Residue D198 is part of the active site. Topologically, residues 210–230 (SVAKSFDAPIKLLFPTGDAAR) are lumenal. A helical membrane pass occupies residues 231-251 (PFSMLGLGDIVIPGIFVALAL). The active site involves D239. At 252-266 (RFDVSRGIKNRYFNS) the chain is on the cytoplasmic side. Residues 267 to 287 (AFLGYTVGLTVTIIVMNWFQA) form a helical membrane-spanning segment. Residues 288–290 (AQP) lie on the Lumenal side of the membrane. Positions 290-292 (PAL) match the PAL motif. The helical transmembrane segment at 291–311 (ALLYIVPGVIGFVAVHCLWNG) threads the bilayer. Residues 312–343 (EVKPLLEYNESKAEEEEACEEDTDSKQNKKKE) lie on the Cytoplasmic side of the membrane. Residues 324 to 334 (AEEEEACEEDT) are compositionally biased toward acidic residues. Residues 324–343 (AEEEEACEEDTDSKQNKKKE) are disordered. The Endoplasmic reticulum targeting signal motif lies at 340–343 (KKKE).

It belongs to the peptidase A22B family. Ubiquitous.

The protein localises to the endoplasmic reticulum membrane. Intramembrane-cleaving aspartic protease (I-CLiP) that cleaves type II membrane signal peptides in the hydrophobic plane of the membrane. Catalyzes intramembrane proteolysis of some signal peptides after they have been cleaved from a preprotein, resulting in the release of the fragment from the ER membrane into the cytoplasm. In Oryza sativa subsp. japonica (Rice), this protein is Signal peptide peptidase 2 (SPP2).